We begin with the raw amino-acid sequence, 160 residues long: Transcriptional repressor NrdR (160 aa).

Polar residues predominate over residues 1–11 (MRCPNCNSLDT). The segment at 1–20 (MRCPNCNSLDTQVKDSRPTE) is disordered. A zinc finger lies at 3–34 (CPNCNSLDTQVKDSRPTEDSSVIRRRRVCVAC). An ATP-cone domain is found at 49–139 (LTVIKRNGRR…VYRNFREAKD (91 aa)).

Belongs to the NrdR family. Zn(2+) serves as cofactor.

In terms of biological role, negatively regulates transcription of bacterial ribonucleotide reductase nrd genes and operons by binding to NrdR-boxes. This is Transcriptional repressor NrdR from Bradyrhizobium diazoefficiens (strain JCM 10833 / BCRC 13528 / IAM 13628 / NBRC 14792 / USDA 110).